Here is a 92-residue protein sequence, read N- to C-terminus: Probable Fe(2+)-trafficking protein (92 aa).

This sequence belongs to the Fe(2+)-trafficking protein family.

Functionally, could be a mediator in iron transactions between iron acquisition and iron-requiring processes, such as synthesis and/or repair of Fe-S clusters in biosynthetic enzymes. The chain is Probable Fe(2+)-trafficking protein from Xanthomonas oryzae pv. oryzae (strain MAFF 311018).